The following is a 140-amino-acid chain: Nuclear receptor 2C2-associated protein (140 aa).

The protein belongs to the NR2C2AP family. In terms of assembly, interacts with NR2C2/TR4.

The protein localises to the nucleus. Functionally, may act as a repressor of NR2C2-mediated transactivation by suppressing the binding between NR2C2/TR4 and the TR4-response element in target genes. The polypeptide is Nuclear receptor 2C2-associated protein (Nr2c2ap) (Mus musculus (Mouse)).